The chain runs to 440 residues: Adenylosuccinate synthetase (440 aa).

GTP is bound by residues 11-17 (GDEGKGG) and 39-41 (GHT). Residue Asp-12 is the Proton acceptor of the active site. The Mg(2+) site is built by Asp-12 and Gly-39. IMP is bound by residues 12-15 (DEGK), 37-40 (NAGH), Thr-127, Arg-141, Gln-230, Thr-245, and Arg-311. His-40 serves as the catalytic Proton donor. 307-313 (TVTGRPR) lines the substrate pocket. GTP is bound by residues Arg-313, 339-341 (HLD), and 424-426 (GVG).

It belongs to the adenylosuccinate synthetase family. Homodimer. Requires Mg(2+) as cofactor.

Its subcellular location is the cytoplasm. The catalysed reaction is IMP + L-aspartate + GTP = N(6)-(1,2-dicarboxyethyl)-AMP + GDP + phosphate + 2 H(+). The protein operates within purine metabolism; AMP biosynthesis via de novo pathway; AMP from IMP: step 1/2. Its function is as follows. Plays an important role in the de novo pathway of purine nucleotide biosynthesis. Catalyzes the first committed step in the biosynthesis of AMP from IMP. The protein is Adenylosuccinate synthetase of Halobacterium salinarum (strain ATCC 29341 / DSM 671 / R1).